A 290-amino-acid polypeptide reads, in one-letter code: MSAQLLEGKVVAAAVLEDVARRVAVLKDKGISPGLGTILVGDDGPSVSYVNKKRETCKQVGIASFHNEIPASATQSDLLAAVRDFNDSPDVDAYIIQYPLPKGFDFNEALNLMLPEKDADGLHPVNLGRLVLQEPGPVPCTPAGIRAMLQHYDIAIEGKEVVVIGRGPTLGRPLSLLLTLKQPYANAAVTVVHSGIKDLGAYTRRADIVIAAAGCPGIVQPDMIRPGAVVISGGISWEGRKLLPDVDEAVGEVAGWITPRLGGVGPTTVAMLLLNTVQAAEERARRAGKL.

NADP(+) is bound by residues 165 to 167 (GRG), serine 194, and isoleucine 235.

The protein belongs to the tetrahydrofolate dehydrogenase/cyclohydrolase family. Homodimer.

The catalysed reaction is (6R)-5,10-methylene-5,6,7,8-tetrahydrofolate + NADP(+) = (6R)-5,10-methenyltetrahydrofolate + NADPH. It catalyses the reaction (6R)-5,10-methenyltetrahydrofolate + H2O = (6R)-10-formyltetrahydrofolate + H(+). Its pathway is one-carbon metabolism; tetrahydrofolate interconversion. In terms of biological role, catalyzes the oxidation of 5,10-methylenetetrahydrofolate to 5,10-methenyltetrahydrofolate and then the hydrolysis of 5,10-methenyltetrahydrofolate to 10-formyltetrahydrofolate. This is Bifunctional protein FolD from Syntrophotalea carbinolica (strain DSM 2380 / NBRC 103641 / GraBd1) (Pelobacter carbinolicus).